A 1497-amino-acid chain; its full sequence is Dual oxidase 1 (1497 aa).

The signal sequence occupies residues Met-1–Gly-21. Over Ile-22 to Asp-587 the chain is Extracellular. Residues Glu-26–Tyr-590 are peroxidase-like; mediates peroxidase activity. N-linked (GlcNAc...) asparagine glycans are attached at residues Asn-66, Asn-305, Asn-567, and Asn-586. Residues Thr-588–Gly-608 form a helical membrane-spanning segment. Topologically, residues Arg-609–Gln-986 are cytoplasmic. 2 EF-hand domains span residues Ala-817–Ala-852 and Pro-853–Thr-888. A helical membrane pass occupies residues His-987–Trp-1007. The Extracellular segment spans residues His-1008–Ala-1024. A helical membrane pass occupies residues Gly-1025–Leu-1045. A Ferric oxidoreductase domain is found at Arg-1030–Met-1210. The Cytoplasmic segment spans residues Thr-1046 to Ser-1068. A helical transmembrane segment spans residues Ala-1069–Val-1089. At Gly-1090 to Leu-1134 the chain is on the extracellular side. A helical transmembrane segment spans residues Thr-1135–Ile-1155. Over Lys-1156 to Arg-1163 the chain is Cytoplasmic. The chain crosses the membrane as a helical span at residues Leu-1164–Leu-1184. Over Leu-1185–Lys-1189 the chain is Extracellular. Residues Phe-1190–Met-1210 form a helical membrane-spanning segment. The FAD-binding FR-type domain maps to Gln-1211–Glu-1318. The Cytoplasmic portion of the chain corresponds to Gln-1211–Phe-1497.

The protein in the N-terminal section; belongs to the peroxidase family. As to quaternary structure, interacts with doxa-1 and tsp-15. Interacts with rho-1. As to expression, expressed in hypodermal cells.

Its subcellular location is the membrane. It carries out the reaction NADH + O2 + H(+) = H2O2 + NAD(+). It catalyses the reaction NADPH + O2 + H(+) = H2O2 + NADP(+). Its activity is regulated as follows. Peroxidase activity is inhibited by aminobenzohydrazide. Its function is as follows. Plays a role in cuticle biogenesis. In complex with doxa-1 and tsp-15, produces reactive oxygen species (ROS), which are probably used by mlt-7 for tyrosine cross-linking, thus stabilizing cuticular extracellular matrix. May regulate the production of ROS by playing a role in modulating proline catabolism. Required in combination with mlt-7 for correct formation of cross-links in cuticle collagens. Association with the GTPase rho-1 promotes ROS production and this interaction may be modulated by memo-1, in order to control the oxidative stress response and longevity. This Caenorhabditis elegans protein is Dual oxidase 1.